The following is a 538-amino-acid chain: [Pyruvate dehydrogenase [acetyl-transferring]]-phosphatase 1, mitochondrial (538 aa).

Residues Met-1–Tyr-71 constitute a mitochondrion transit peptide. The 417-residue stretch at Val-109 to Phe-525 folds into the PPM-type phosphatase domain. Asp-144 and Gly-145 together coordinate Mn(2+). Position 202 is an N6-acetyllysine (Lys-202). Residues Asp-418 and Asp-516 each contribute to the Mn(2+) site.

Belongs to the PP2C family. In terms of assembly, heterodimer of a catalytic (PDP1) and a regulatory (PDPR) subunit. It depends on Mn(2+) as a cofactor. Requires Mg(2+) as cofactor.

The protein localises to the mitochondrion. The catalysed reaction is O-phospho-L-seryl-[pyruvate dehydrogenase E1 alpha subunit] + H2O = L-seryl-[pyruvate dehydrogenase E1 alpha subunit] + phosphate. With respect to regulation, magnesium-dependent and calcium-stimulated. PDP1 activity strongly depends on its Ca(2+)-dependent binding to the lipoyl domain of E2 subunit of component of the pyruvate dehydrogenase complex. Functionally, mitochondrial enzyme that catalyzes the dephosphorylation and concomitant reactivation of the alpha subunit of the E1 component of the pyruvate dehydrogenase complex (PDC), thereby stimulating the conversion of pyruvate into acetyl-CoA. This Bos taurus (Bovine) protein is [Pyruvate dehydrogenase [acetyl-transferring]]-phosphatase 1, mitochondrial (PDP1).